A 417-amino-acid polypeptide reads, in one-letter code: MASEKSFKKRKITDDVDGVGVGGGLESLPEDIIADIFSRLPISSIARLMFVCRSWRSVLTQHGRLSSSSSSPTKPCLLLHCDSPIRNGLHFLDLSEEEKRIKTKKFTLRFASSMPEFDVVGSCNGLLCLSDSLYNDSLYLYNPFTTNSLELPECSNKYHDQELVFGFGFHEMTKEYKVLKIVYFRGSSSNNNGIYRGRGRIQYKQSEVQILTLSSKTTDQSLSWRSLGKAPYKFVKRSSEALVNGRLHFVTRPRRHVPDRKFVSFDLEDEEFKEIPKPDCGGLNRTNHRLVNLKGCLCAVVYGNYGKLDIWVMKTYGVKESWGKEYSIGTYLPKGLKQNLDRPMWIWKNAENGKVVRVLCLLENGEILLEYKSRVLVAYDPKLGKFKDLLFHGLPNWFHTVVHAGTLSWFDTPLDLW.

The F-box domain maps to 22-68; sequence GGGLESLPEDIIADIFSRLPISSIARLMFVCRSWRSVLTQHGRLSSS.

The polypeptide is F-box protein At3g07870 (Arabidopsis thaliana (Mouse-ear cress)).